A 325-amino-acid polypeptide reads, in one-letter code: Cell division protein ZipA (325 aa).

Topologically, residues 1 to 5 are periplasmic; it reads MQELR. The helical transmembrane segment at 6-26 threads the bilayer; that stretch reads LVLILVGALAIAALLFHGLWT. Residues 27-325 lie on the Cytoplasmic side of the membrane; sequence SRKETSSKFG…KQRVKVFCRK (299 aa).

The protein belongs to the ZipA family. As to quaternary structure, interacts with FtsZ via their C-terminal domains.

The protein resides in the cell inner membrane. Essential cell division protein that stabilizes the FtsZ protofilaments by cross-linking them and that serves as a cytoplasmic membrane anchor for the Z ring. Also required for the recruitment to the septal ring of downstream cell division proteins. The polypeptide is Cell division protein ZipA (Aliivibrio fischeri (strain MJ11) (Vibrio fischeri)).